Consider the following 103-residue polypeptide: Small ribosomal subunit protein bS6c (103 aa).

The protein belongs to the bacterial ribosomal protein bS6 family.

The protein resides in the plastid. Its subcellular location is the chloroplast. Its function is as follows. Binds together with bS18 to 16S ribosomal RNA. The sequence is that of Small ribosomal subunit protein bS6c from Gracilaria tenuistipitata var. liui (Red alga).